We begin with the raw amino-acid sequence, 193 residues long: Bcl-2-binding component 3 (193 aa).

Disordered regions lie at residues 1–31 (MARA…GRLM) and 71–131 (ALGG…VEEE). A Phosphoserine modification is found at S10. Positions 137-151 (IGAQLRRMADDLNAQ) match the BH3 motif.

Belongs to the Bcl-2 family. As to quaternary structure, interacts with MCL1 and BCL2A1. Interacts with BCL2 and BCL2L1/BCL-XL. Interacts (via BH3 domain) with NOL3 (via CARD domain); this interaction prevents BBC3 association with BCL2 and results in CASP8 activation.

The protein localises to the mitochondrion. Essential mediator of p53/TP53-dependent and p53/TP53-independent apoptosis. Promotes partial unfolding of BCL2L1 and dissociation of BCL2L1 from p53/TP53, releasing the bound p53/TP53 to induce apoptosis. Regulates ER stress-induced neuronal apoptosis. This Mus musculus (Mouse) protein is Bcl-2-binding component 3 (Bbc3).